The primary structure comprises 345 residues: S-adenosylmethionine:tRNA ribosyltransferase-isomerase (345 aa).

It belongs to the QueA family. Monomer.

It localises to the cytoplasm. It catalyses the reaction 7-aminomethyl-7-carbaguanosine(34) in tRNA + S-adenosyl-L-methionine = epoxyqueuosine(34) in tRNA + adenine + L-methionine + 2 H(+). The protein operates within tRNA modification; tRNA-queuosine biosynthesis. Functionally, transfers and isomerizes the ribose moiety from AdoMet to the 7-aminomethyl group of 7-deazaguanine (preQ1-tRNA) to give epoxyqueuosine (oQ-tRNA). The protein is S-adenosylmethionine:tRNA ribosyltransferase-isomerase of Helicobacter pylori (strain ATCC 700392 / 26695) (Campylobacter pylori).